A 149-amino-acid chain; its full sequence is 3-hydroxyacyl-[acyl-carrier-protein] dehydratase FabZ (149 aa).

The active site involves histidine 53.

The protein belongs to the thioester dehydratase family. FabZ subfamily.

Its subcellular location is the cytoplasm. The catalysed reaction is a (3R)-hydroxyacyl-[ACP] = a (2E)-enoyl-[ACP] + H2O. Functionally, involved in unsaturated fatty acids biosynthesis. Catalyzes the dehydration of short chain beta-hydroxyacyl-ACPs and long chain saturated and unsaturated beta-hydroxyacyl-ACPs. This Neisseria gonorrhoeae (strain ATCC 700825 / FA 1090) protein is 3-hydroxyacyl-[acyl-carrier-protein] dehydratase FabZ.